Reading from the N-terminus, the 1393-residue chain is DNA glycosylase/AP lyase ROS1 (1393 aa).

Disordered stretches follow at residues 1–25 (MEKQ…MKPF), 98–186 (SLSS…TSTR), and 237–265 (LSAP…SNLE). Over residues 98–108 (SLSSVSNNVAE) the composition is skewed to low complexity. The span at 117–126 (PKRKKHRPKV) shows a compositional bias: basic residues. Basic and acidic residues-rich tracts occupy residues 127–138 (RREAKPKREPKP) and 162–171 (KKVEVSKDQD). Positions 243 to 256 (PKRKRSQGKRKGVQ) are enriched in basic residues. A DEMETER region spans residues 528–626 (KVDLDDETDR…AFMSLASQFP (99 aa)). The span at 653 to 672 (EETMSSPPDHNHSSVTLKNT) shows a compositional bias: polar residues. 2 disordered regions span residues 653 to 722 (EETM…SVEV) and 789 to 830 (SNQV…CSQQ). Residues 687–698 (SRSSSEIAISAH) are compositionally biased toward low complexity. Basic and acidic residues predominate over residues 699-722 (ESVDKTTDSKEYVDSDRKGSSVEV). The segment covering 816-830 (KSSVDSSEPGCCSQQ) has biased composition (polar residues). A Glycyl lysine isopeptide (Lys-Gly) (interchain with G-Cter in ubiquitin) cross-link involves residue Lys-901. Positions 1038, 1045, 1048, and 1054 each coordinate [4Fe-4S] cluster.

The protein belongs to the DNA glycosylase family. DEMETER subfamily. In terms of assembly, interacts (via the central region) with ZDP. Binds to RPA2A. Interacts with XRCC1. Interacts probably with a complex made of MBD7, IDM1, IDM2 and IDM3. Interacts with APE1L. [4Fe-4S] cluster is required as a cofactor. As to expression, expressed ubiquitously in both vegetative and reproductive organs.

It is found in the nucleus. The protein localises to the nucleolus. The enzyme catalyses 2'-deoxyribonucleotide-(2'-deoxyribose 5'-phosphate)-2'-deoxyribonucleotide-DNA = a 3'-end 2'-deoxyribonucleotide-(2,3-dehydro-2,3-deoxyribose 5'-phosphate)-DNA + a 5'-end 5'-phospho-2'-deoxyribonucleoside-DNA + H(+). With respect to regulation, stimulated by ZDP. Stimulated by XRCC1. Functionally, bifunctional DNA glycosylase/lyase, which excises 5-methylcytosine (5-meC) and 5-hydroxymethylcytosine (5-hmeC), leaving an apyrimidinic (AP) site that is subsequently incised by the lyase activity. Generates 3'-phosphor-alpha,beta-unsaturated aldehyde (3'-PUA) as a primary 5-meC excision intermediate. Prevents DNA hypermethylation, specifically in the promoter of otherwise silenced loci. May be involved in DNA repair through its nicking activity on methylated DNA. Binds with similar affinity to both methylated and non-methylated DNA. Highly distributive behavior on DNA substrates containing multiple 5-meC residues. Involved with Pol IV in the remodeling of the 5S rDNA chromatin via DNA methylation modifications during the first days of development post-germination. Participates in UV-B induced- and oxidative DNA damage repair. The chain is DNA glycosylase/AP lyase ROS1 from Arabidopsis thaliana (Mouse-ear cress).